A 380-amino-acid chain; its full sequence is Cytochrome b (380 aa).

The next 4 helical transmembrane spans lie at Phe-34–Met-54, Trp-78–Ile-99, Trp-114–Leu-134, and Phe-179–Thr-199. The heme b site is built by His-84 and His-98. Residues His-183 and His-197 each coordinate heme b. His-202 contacts a ubiquinone. 4 helical membrane passes run Leu-227–Ser-247, Leu-289–His-309, Leu-321–Ser-341, and Phe-348–Pro-368.

The protein belongs to the cytochrome b family. In terms of assembly, the cytochrome bc1 complex contains 11 subunits: 3 respiratory subunits (MT-CYB, CYC1 and UQCRFS1), 2 core proteins (UQCRC1 and UQCRC2) and 6 low-molecular weight proteins (UQCRH/QCR6, UQCRB/QCR7, UQCRQ/QCR8, UQCR10/QCR9, UQCR11/QCR10 and a cleavage product of UQCRFS1). This cytochrome bc1 complex then forms a dimer. Requires heme b as cofactor.

The protein localises to the mitochondrion inner membrane. Functionally, component of the ubiquinol-cytochrome c reductase complex (complex III or cytochrome b-c1 complex) that is part of the mitochondrial respiratory chain. The b-c1 complex mediates electron transfer from ubiquinol to cytochrome c. Contributes to the generation of a proton gradient across the mitochondrial membrane that is then used for ATP synthesis. In Macronectes giganteus (Southern giant petrel), this protein is Cytochrome b (MT-CYB).